Here is a 262-residue protein sequence, read N- to C-terminus: Hydroxyethylthiazole kinase (262 aa).

Met-40 is a binding site for substrate. The ATP site is built by Lys-116 and Thr-162. Gly-189 lines the substrate pocket.

It belongs to the Thz kinase family. Mg(2+) serves as cofactor.

The enzyme catalyses 5-(2-hydroxyethyl)-4-methylthiazole + ATP = 4-methyl-5-(2-phosphooxyethyl)-thiazole + ADP + H(+). It functions in the pathway cofactor biosynthesis; thiamine diphosphate biosynthesis; 4-methyl-5-(2-phosphoethyl)-thiazole from 5-(2-hydroxyethyl)-4-methylthiazole: step 1/1. Catalyzes the phosphorylation of the hydroxyl group of 4-methyl-5-beta-hydroxyethylthiazole (THZ). The sequence is that of Hydroxyethylthiazole kinase from Clostridioides difficile (strain 630) (Peptoclostridium difficile).